The primary structure comprises 316 residues: tRNA pseudouridine synthase B (316 aa).

Catalysis depends on Asp38, which acts as the Nucleophile. The PUA domain maps to 238–312 (YPEVIVKSSA…PVCVLARQAG (75 aa)).

The protein belongs to the pseudouridine synthase TruB family. Type 1 subfamily.

The catalysed reaction is uridine(55) in tRNA = pseudouridine(55) in tRNA. Functionally, responsible for synthesis of pseudouridine from uracil-55 in the psi GC loop of transfer RNAs. This chain is tRNA pseudouridine synthase B, found in Pelotomaculum thermopropionicum (strain DSM 13744 / JCM 10971 / SI).